The primary structure comprises 224 residues: MGSNAVPSLWYWVVDERTTSGRGTWWAHTELNWGTDKQKEFVENQLGFNETSATDSHNFKKALLHQPAYLISGLDVVADHLVFAAFRAGAVGYDMTTDTNASTYNQALTWSTTAGLDSAGGYKALVENTAGLNGPINGLFTLLDTFAYVTPVSGMKGGSKNTEAVQTTYPVKSDQKASAKIASLINASPLNSYGDKKSHPPKVKGRQLQNIFDDWKLTKAVSLM.

Belongs to the MgpC family.

The protein is Putative MgpC-like protein MPN_150 of Mycoplasma pneumoniae (strain ATCC 29342 / M129 / Subtype 1) (Mycoplasmoides pneumoniae).